We begin with the raw amino-acid sequence, 583 residues long: Probable GTP diphosphokinase CRSH, chloroplastic (583 aa).

The N-terminal 58 residues, 1–58, are a transit peptide targeting the chloroplast; it reads MSVIRPSPIPIPRCRSQVLHRRLYSIQLIQRRRRRWNPRSEVEDTAIESTARSPEAAG. An HD domain is found at 112–212; the sequence is PLSKALSLSI…MDLVSKLDEM (101 aa). EF-hand domains follow at residues 470-505 and 507-539; these read TTTN…LGAP and EDAE…VEFM. The Ca(2+) site is built by Asp-483, Asn-485, Asp-487, Met-489, Glu-494, Asp-517, Asn-519, Asp-521, Ser-523, and Glu-528.

The protein belongs to the RelA/SpoT family. Expressed in shoots, cotyledons, rosette and cauline leaves, stems, sepals, pistils and siliques.

The protein resides in the plastid. It localises to the chloroplast. It catalyses the reaction GTP + ATP = guanosine 3'-diphosphate 5'-triphosphate + AMP. With respect to regulation, activated by calcium. In terms of biological role, possesses calcium-dependent ppGpp (guanosine 3'-diphosphate 5'-diphosphate) synthetase activity in vitro and is able to functionally complement E.coli relA mutants. Plays an important role in the timing adjustment of pistil and pollen maturation required for successful pollination. May be involved in a rapid plant ppGpp-mediated response to pathogens and other stresses. The protein is Probable GTP diphosphokinase CRSH, chloroplastic (CRSH) of Arabidopsis thaliana (Mouse-ear cress).